The chain runs to 363 residues: MGNIHIQTKSKEYDVYVGKESLSHLTTIVQNMQPSVSNIMIISDEAVASLHLQTVVDALQIDQKVFSFVVPSGEKEKSFENFYAAHTSALENKLDRNSLIVALGGGMIGDLAGFVAASFMRGIRFVQVPTTLLAHDSAVGGKVAINHPLGKNMIGAFHQPEAVVYHTPFLQSLPEKEWRSGYAEVIKHALIGDVKLYHWLKEEVQTLADLRDEKLIHILTKAIPVKANIVAQDETEKGVRAHLNFGHTLGHALEKELGYGNITHGDGVAVGMLFAIFLSEQVYKVNLAYEEMKQWFLKYGYPKMPSDLSVERLVGLMKQDKKANAGTIHMVLMQEYGVVNVVSIPDETVHIALEAFQKDMVEK.

NAD(+) is bound by residues serine 72 to lysine 77, threonine 130 to threonine 131, lysine 142, and lysine 151. Zn(2+)-binding residues include glutamate 184, histidine 247, and histidine 264.

This sequence belongs to the sugar phosphate cyclases superfamily. Dehydroquinate synthase family. Requires Co(2+) as cofactor. Zn(2+) is required as a cofactor. It depends on NAD(+) as a cofactor.

Its subcellular location is the cytoplasm. The enzyme catalyses 7-phospho-2-dehydro-3-deoxy-D-arabino-heptonate = 3-dehydroquinate + phosphate. Its pathway is metabolic intermediate biosynthesis; chorismate biosynthesis; chorismate from D-erythrose 4-phosphate and phosphoenolpyruvate: step 2/7. Catalyzes the conversion of 3-deoxy-D-arabino-heptulosonate 7-phosphate (DAHP) to dehydroquinate (DHQ). The chain is 3-dehydroquinate synthase from Bacillus thuringiensis (strain Al Hakam).